An 85-amino-acid chain; its full sequence is Cell division topological specificity factor (85 aa).

Belongs to the MinE family.

In terms of biological role, prevents the cell division inhibition by proteins MinC and MinD at internal division sites while permitting inhibition at polar sites. This ensures cell division at the proper site by restricting the formation of a division septum at the midpoint of the long axis of the cell. The sequence is that of Cell division topological specificity factor from Xylella fastidiosa (strain M23).